The sequence spans 215 residues: MRDELVWIDCEMTGLDLGSDKLIEIAALVTDAELNVLGDGVDVVIHADDAALAAMGEVVTEMHSRSGLIDEVKASTVDLATAEEMVLDYIRTHVKAPKTAPLAGNSIATDRAFIVRDMPALDSYLHYRMIDVSSIKELCRRWYPRIYFGQPVKGLTHRALADIHESIRELQFYRRTAFVAPPGPSTSEIEAVAAALDEGKDAPGPSDSASAPPTG.

The Exonuclease domain occupies 5–170 (LVWIDCEMTG…ADIHESIREL (166 aa)). The active site involves Y127. Residues 196–215 (LDEGKDAPGPSDSASAPPTG) are disordered. Positions 202–215 (APGPSDSASAPPTG) are enriched in low complexity.

Belongs to the oligoribonuclease family.

Its subcellular location is the cytoplasm. Functionally, 3'-to-5' exoribonuclease specific for small oligoribonucleotides. The protein is Oligoribonuclease of Mycobacterium avium (strain 104).